Consider the following 705-residue polypeptide: GATOR2 complex protein WDR24 (705 aa).

6 WD repeats span residues 1 to 28, 34 to 74, 77 to 117, 121 to 161, 165 to 207, and 211 to 254; these read MDEN…RNKQ, EHKR…SVST, GQSE…RYER, AHNG…AKEI, QTIA…IPSA, and EHKD…IDRA. Residues 633–655 form a C4-type zinc finger; that stretch reads NCSNCKRPMSNRGWICDRCRQCA. Residues Cys-634, Cys-637, Cys-648, Cys-651, Cys-658, Cys-661, Cys-672, Cys-675, His-677, His-680, His-683, Cys-694, Cys-698, His-700, and Cys-702 each contribute to the Zn(2+) site. The RING-type; atypical zinc-finger motif lies at 656 to 705; it reads SMCAVCHHVVKGLFVWCQGCSHGGHLQHIMKWLETSSHCPAGCGHLCEYT.

It belongs to the WD repeat WDR24 family. As to quaternary structure, component of the GATOR2 subcomplex, composed of MIOS, SEC13, SEH1L, WDR24 and WDR59. The GATOR2 complex interacts with CASTOR1 and CASTOR2; the interaction is negatively regulated by arginine. The GATOR2 complex interacts with SESN1, SESN2 and SESN3; the interaction is negatively regulated by amino acids.

The protein resides in the lysosome membrane. It catalyses the reaction S-ubiquitinyl-[E2 ubiquitin-conjugating enzyme]-L-cysteine + [acceptor protein]-L-lysine = [E2 ubiquitin-conjugating enzyme]-L-cysteine + N(6)-ubiquitinyl-[acceptor protein]-L-lysine.. It functions in the pathway protein modification; protein ubiquitination. The GATOR2 complex is negatively regulated by the upstream amino acid sensors CASTOR1 and SESN2, which sequester the GATOR2 complex in absence of amino acids. In the presence of abundant amino acids, GATOR2 is released from CASTOR1 and SESN2 and activated. In terms of biological role, catalytic component of the GATOR2 complex, a multiprotein complex that acts as an activator of the amino acid-sensing branch of the mTORC1 signaling pathway. The GATOR2 complex indirectly activates mTORC1 through the inhibition of the GATOR1 subcomplex. GATOR2 probably acts as an E3 ubiquitin-protein ligase toward GATOR1. In the presence of abundant amino acids, the GATOR2 complex mediates ubiquitination of the NPRL2 core component of the GATOR1 complex, leading to GATOR1 inactivation. In the absence of amino acids, GATOR2 is inhibited, activating the GATOR1 complex. In addition to its role in regulation of the mTORC1 complex, promotes the acidification of lysosomes and facilitates autophagic flux. Within the GATOR2 complex, WDR24 constitutes the catalytic subunit that mediates 'Lys-6'-linked ubiquitination of NPRL2. This is GATOR2 complex protein WDR24 from Gallus gallus (Chicken).